Here is a 448-residue protein sequence, read N- to C-terminus: Phosphoglucosamine mutase (448 aa).

The active-site Phosphoserine intermediate is the Ser-104. Mg(2+) contacts are provided by Ser-104, Asp-241, Asp-243, and Asp-245. Ser-104 is subject to Phosphoserine.

This sequence belongs to the phosphohexose mutase family. The cofactor is Mg(2+). Post-translationally, activated by phosphorylation.

The enzyme catalyses alpha-D-glucosamine 1-phosphate = D-glucosamine 6-phosphate. Functionally, catalyzes the conversion of glucosamine-6-phosphate to glucosamine-1-phosphate. This Nocardioides sp. (strain ATCC BAA-499 / JS614) protein is Phosphoglucosamine mutase.